A 308-amino-acid polypeptide reads, in one-letter code: MSWLEKILEKSNLVSSRKASIPEGVWTKCTSCEQVLYHAELERNLEVCPKCNHHMRMKARRRLETFLDEGNRVELGTELEPQDKLKFKDSKRYKERISAAQKSSGEKDALIVMQGELLGMPLVACAFEFSFMGGSMGSVVGARFVKAVEAAIENNCALVCFSASGGARMQEALMSLMQMAKTSAALERLSEKGLPFISVLTDPTMGGVSASLAMLGDINIGEPKALIGFAGRRVIEQTVREDLPEGFQRSEFLLEHGAIDMIVDRREMRQRVGGLIAKMTNHKSPLVVSVNESPNEEPYSVPEVDEKG.

In terms of domain architecture, CoA carboxyltransferase N-terminal spans 25 to 294 (VWTKCTSCEQ…PLVVSVNESP (270 aa)). Zn(2+) is bound by residues Cys29, Cys32, Cys48, and Cys51. The C4-type zinc finger occupies 29–51 (CTSCEQVLYHAELERNLEVCPKC). Residues 288-308 (VSVNESPNEEPYSVPEVDEKG) are disordered.

This sequence belongs to the AccD/PCCB family. In terms of assembly, acetyl-CoA carboxylase is a heterohexamer composed of biotin carboxyl carrier protein (AccB), biotin carboxylase (AccC) and two subunits each of ACCase subunit alpha (AccA) and ACCase subunit beta (AccD). Requires Zn(2+) as cofactor.

It is found in the cytoplasm. The enzyme catalyses N(6)-carboxybiotinyl-L-lysyl-[protein] + acetyl-CoA = N(6)-biotinyl-L-lysyl-[protein] + malonyl-CoA. It participates in lipid metabolism; malonyl-CoA biosynthesis; malonyl-CoA from acetyl-CoA: step 1/1. In terms of biological role, component of the acetyl coenzyme A carboxylase (ACC) complex. Biotin carboxylase (BC) catalyzes the carboxylation of biotin on its carrier protein (BCCP) and then the CO(2) group is transferred by the transcarboxylase to acetyl-CoA to form malonyl-CoA. This is Acetyl-coenzyme A carboxylase carboxyl transferase subunit beta 1 from Vibrio parahaemolyticus serotype O3:K6 (strain RIMD 2210633).